A 204-amino-acid chain; its full sequence is High frequency lysogenization protein HflD homolog (204 aa).

This sequence belongs to the HflD family.

Its subcellular location is the cytoplasm. The protein localises to the cell inner membrane. The chain is High frequency lysogenization protein HflD homolog from Shewanella sediminis (strain HAW-EB3).